The chain runs to 247 residues: tRNA pseudouridine synthase A (247 aa).

Aspartate 52 functions as the Nucleophile in the catalytic mechanism. Tyrosine 113 contributes to the substrate binding site.

Belongs to the tRNA pseudouridine synthase TruA family. Homodimer.

The catalysed reaction is uridine(38/39/40) in tRNA = pseudouridine(38/39/40) in tRNA. Functionally, formation of pseudouridine at positions 38, 39 and 40 in the anticodon stem and loop of transfer RNAs. This chain is tRNA pseudouridine synthase A, found in Bartonella quintana (strain Toulouse) (Rochalimaea quintana).